Consider the following 156-residue polypeptide: Protein-export protein SecB (156 aa).

The protein belongs to the SecB family. In terms of assembly, homotetramer, a dimer of dimers. One homotetramer interacts with 1 SecA dimer.

Its subcellular location is the cytoplasm. One of the proteins required for the normal export of preproteins out of the cell cytoplasm. It is a molecular chaperone that binds to a subset of precursor proteins, maintaining them in a translocation-competent state. It also specifically binds to its receptor SecA. In Pectobacterium carotovorum subsp. carotovorum (strain PC1), this protein is Protein-export protein SecB.